The chain runs to 487 residues: Serine/threonine-protein kinase 4 (487 aa).

Met-1 bears the N-acetylmethionine mark. Position 3 is a phosphothreonine (Thr-3). Residues 30 to 281 (FDVLEKLGEG…ATQLLQHPFV (252 aa)) enclose the Protein kinase domain. ATP contacts are provided by residues 36–44 (LGEGSYGSV) and Lys-59. The Proton acceptor role is filled by Asp-149. Thr-183 carries the post-translational modification Phosphothreonine; by autocatalysis. Residue Ser-265 is modified to Phosphoserine. The stretch at 290–310 (LRDLINEAMDVKLKRQEAQQR) forms a coiled coil. The interval 305–337 (QEAQQREVDQDDEENSEEDELDSGTMVRAVGDE) is disordered. Residues 313–326 (DQDDEENSEEDELD) are compositionally biased toward acidic residues. Phosphoserine is present on Ser-320. Phosphothreonine occurs at positions 340 and 367. Position 387 is a phosphothreonine; by PKB/AKT1 (Thr-387). Residues Ser-410 and Ser-414 each carry the phosphoserine modification. Phosphotyrosine is present on Tyr-433. Positions 433–480 (YEFLKSWTVEDLQKRLLALDPMMEQEIEEIRQKYQSKRQPILDAIEAK) constitute an SARAH domain.

The protein belongs to the protein kinase superfamily. STE Ser/Thr protein kinase family. STE20 subfamily. As to quaternary structure, homodimer; mediated via the coiled-coil region. Interacts with NORE1, which inhibits autoactivation. Interacts with and stabilizes SAV1. Interacts with RASSF1. Interacts with FOXO3. Interacts with RASSF2 (via SARAH domain). Interacts with AR, PKB/AKT1, TNNI3 and SIRT1. Interacts with DLG5 (via PDZ domain 3). Interacts with MARK3 and SCRIB in the presence of DLG5. Requires Mg(2+) as cofactor. In terms of processing, autophosphorylated on serine and threonine residues. Phosphorylation at Thr-387 by PKB/AKT1, leads to inhibition of its: kinase activity, nuclear translocation and autophosphorylation at Thr-183. It also diminishes its cleavage by caspases and its ability to phosphorylate FOXO3. Proteolytically cleaved by caspase-3 during apoptosis at Asp-326 and Asp-349 resulting in a 37 kDa or a 39 kDa subunit respectively. The 39 kDa subunit is further cleaved into the 37 kDa form. Proteolytic cleavage results in kinase activation and nuclear translocation of the truncated form (MST1/N). It is less likely that cleavage at Asp-349 is a prerequisite for activation as this site is not conserved in the murine ortholog.

Its subcellular location is the cytoplasm. The protein localises to the nucleus. It carries out the reaction L-seryl-[protein] + ATP = O-phospho-L-seryl-[protein] + ADP + H(+). The enzyme catalyses L-threonyl-[protein] + ATP = O-phospho-L-threonyl-[protein] + ADP + H(+). Inhibited by the C-terminal non-catalytic region. Activated by caspase-cleavage. Full activation also requires homodimerization and autophosphorylation of Thr-183. Activated by RASSF1 which acts by preventing its dephosphorylation. Stress-activated, pro-apoptotic kinase which, following caspase-cleavage, enters the nucleus and induces chromatin condensation followed by internucleosomal DNA fragmentation. Key component of the Hippo signaling pathway which plays a pivotal role in organ size control and tumor suppression by restricting proliferation and promoting apoptosis. The core of this pathway is composed of a kinase cascade wherein STK3/MST2 and STK4/MST1, in complex with its regulatory protein SAV1, phosphorylates and activates LATS1/2 in complex with its regulatory protein MOB1, which in turn phosphorylates and inactivates YAP1 oncoprotein and WWTR1/TAZ. Phosphorylation of YAP1 by LATS2 inhibits its translocation into the nucleus to regulate cellular genes important for cell proliferation, cell death, and cell migration. STK3/MST2 and STK4/MST1 are required to repress proliferation of mature hepatocytes, to prevent activation of facultative adult liver stem cells (oval cells), and to inhibit tumor formation. Phosphorylates 'Ser-14' of histone H2B (H2BS14ph) during apoptosis. Phosphorylates FOXO3 upon oxidative stress, which results in its nuclear translocation and cell death initiation. Phosphorylates MOBKL1A, MOBKL1B and RASSF2. Phosphorylates TNNI3 (cardiac Tn-I) and alters its binding affinity to TNNC1 (cardiac Tn-C) and TNNT2 (cardiac Tn-T). Phosphorylates FOXO1 on 'Ser-212' and regulates its activation and stimulates transcription of PMAIP1 in a FOXO1-dependent manner. Phosphorylates SIRT1 and inhibits SIRT1-mediated p53/TP53 deacetylation, thereby promoting p53/TP53 dependent transcription and apoptosis upon DNA damage. Acts as an inhibitor of PKB/AKT1. Phosphorylates AR on 'Ser-650' and suppresses its activity by intersecting with PKB/AKT1 signaling and antagonizing formation of AR-chromatin complexes. The polypeptide is Serine/threonine-protein kinase 4 (STK4) (Otolemur garnettii (Small-eared galago)).